Consider the following 304-residue polypeptide: Non-specific ribonucleoside hydrolase RihC (304 aa).

His-233 is an active-site residue.

Belongs to the IUNH family. RihC subfamily.

Hydrolyzes both purine and pyrimidine ribonucleosides with a broad-substrate specificity. The protein is Non-specific ribonucleoside hydrolase RihC of Escherichia coli O45:K1 (strain S88 / ExPEC).